We begin with the raw amino-acid sequence, 305 residues long: Olfactory receptor 4F4 (305 aa).

Residues 1–18 (MVTEFIFLGLSDSQELQT) lie on the Extracellular side of the membrane. A helical transmembrane segment spans residues 19–42 (FLFMLFFVFYGGIVFGNLLIVITV). Over 43–50 (VSDSHLHS) the chain is Cytoplasmic. A helical transmembrane segment spans residues 51 to 72 (PMYFLLANLSLIDLSLSSVTAP). Topologically, residues 73-93 (KMITDFFSQRKVISFKGCLVQ) are extracellular. C90 and C182 form a disulfide bridge. A helical membrane pass occupies residues 94–113 (IFLLHFFGGSEMVILIAMGF). Residues 114-132 (DRYIAICKPLHYTTIMCGN) lie on the Cytoplasmic side of the membrane. A helical membrane pass occupies residues 133–151 (ACVGIMAVAWGIGFLHSVS). The Extracellular portion of the chain corresponds to 152-188 (QLAFAVHLPFCGPNEVDSFYCDLPRVIKLACTDTYRL). The chain crosses the membrane as a helical span at residues 189–212 (DIMVIANSGVLTVCSFVLLIISYT). Over 213–228 (IILMTIQHCPLDKSSK) the chain is Cytoplasmic. Residues 229–251 (ALSTLTAHITVVLLFFGPCVFIY) form a helical membrane-spanning segment. The Extracellular segment spans residues 252–262 (AWPFPIKSLDK). A helical membrane pass occupies residues 263–282 (FLAVFYSVITPLLNPIIYTL). Over 283 to 305 (RNKDMKTAIRRLRKWDAHSSVKF) the chain is Cytoplasmic.

Belongs to the G-protein coupled receptor 1 family.

Its subcellular location is the cell membrane. Its function is as follows. Odorant receptor. The protein is Olfactory receptor 4F4 (OR4F4) of Homo sapiens (Human).